The following is a 506-amino-acid chain: MSPPGGDATVGSDEKRQKGKATPDTIKMGCIAMVMKEGQLRRAEILSIKDTKSGRQFYCNFDNFNKRLDEWVPAARIDFEQDVEWPNPDKDKQKDAKTKKNNSTVSKKQPSKKNNQKKASKREQSVASDGQTPHPWTEFVESQPGKNNRQRGKTEDGTDVNASLEVGGDKGVKRKADEIDMDEDEIPAAKKQRQPSFSREQEIEKLRTSGSMTQNPTEISRIRNISKVEFGRYVLFPWYFSPYPQIFDQEDCIYICEFCLSYYGELKSFVRHRQKCTLHHPPGNEIYRDDYVSFFEIDGRRQRTWCRNLCLLSKMFLDHKTLYYDVDPFLFYVMTTRDDRGCHIIGYFSKEKESTDGYNVACILTLPQYQRKGYGRLLIQFSYELSKIEGKLGSPEKPLSDLGLLSYRQYWSENIIDILLGYNERKEACTIENIAVALAMTTQDVEHTLQALKMQVYHKGEHKIVVPEKLIKQREKSKAKQKRLIDPERIQWKPPVFTALNRTWGW.

Residues 1-24 are disordered; the sequence is MSPPGGDATVGSDEKRQKGKATPD. A Tudor-knot domain is found at 26-78; it reads IKMGCIAMVMKEGQLRRAEILSIKDTKSGRQFYCNFDNFNKRLDEWVPAARID. Residues 82–215 are disordered; sequence DVEWPNPDKD…LRTSGSMTQN (134 aa). Positions 87–98 are enriched in basic and acidic residues; sequence NPDKDKQKDAKT. A compositionally biased stretch (basic residues) spans 109 to 120; the sequence is QPSKKNNQKKAS. Residues 167–178 show a composition bias toward basic and acidic residues; that stretch reads GGDKGVKRKADE. One can recognise an MYST-type HAT domain in the interval 220–494; sequence SRIRNISKVE…IDPERIQWKP (275 aa). The segment at 253 to 278 adopts a C2HC MYST-type zinc-finger fold; that stretch reads IYICEFCLSYYGELKSFVRHRQKCTL. Positions 303 to 324 match the ESA1-RPD3 motif motif; it reads RTWCRNLCLLSKMFLDHKTLYY. K320 is subject to N6-acetyllysine; by autocatalysis. Acetyl-CoA is bound by residues 361–365 and 370–376; these read ACILT and QRKGYGR. The Proton donor/acceptor role is filled by E396. S400 lines the acetyl-CoA pocket.

This sequence belongs to the MYST (SAS/MOZ) family. As to quaternary structure, component of the NuA4 histone acetyltransferase complex. Post-translationally, autoacetylation at Lys-320 is required for proper function.

It is found in the nucleus. The protein localises to the chromosome. The enzyme catalyses L-lysyl-[histone] + acetyl-CoA = N(6)-acetyl-L-lysyl-[histone] + CoA + H(+). It catalyses the reaction L-lysyl-[protein] + acetyl-CoA = N(6)-acetyl-L-lysyl-[protein] + CoA + H(+). The catalysed reaction is 2-hydroxyisobutanoyl-CoA + L-lysyl-[protein] = N(6)-(2-hydroxyisobutanoyl)-L-lysyl-[protein] + CoA + H(+). It carries out the reaction (2E)-butenoyl-CoA + L-lysyl-[protein] = N(6)-(2E)-butenoyl-L-lysyl-[protein] + CoA + H(+). Functionally, catalytic component of the NuA4 histone acetyltransferase (HAT) complex which is involved in epigenetic transcriptional activation of selected genes principally by acetylation of nucleosomal histones H4, H3, H2B, H2A and H2A variant H2A.Z. Acetylates histone H4 to form H4K5ac, H4K8ac, H4K12ac and H4K16ac, histone H3 to form H3K14ac, and histone H2A to form H2AK4ac and H2AK7ac. The NuA4 complex is involved in the DNA damage response and is required for chromosome segregation. The NuA4 complex plays a direct role in repair of DNA double-strand breaks (DSBs) through homologous recombination. Recruitment to promoters depends on H3K4me. Also acetylates non-histone proteins. In addition to protein acetyltransferase, can use different acyl-CoA substrates, such as 2-hydroxyisobutanoyl-CoA (2-hydroxyisobutyryl-CoA) or (2E)-butenoyl-CoA (crotonyl-CoA), and is able to mediate protein 2-hydroxyisobutyrylation and crotonylation, respectively. The polypeptide is Histone acetyltransferase esa-1 (esa-1) (Neurospora crassa (strain ATCC 24698 / 74-OR23-1A / CBS 708.71 / DSM 1257 / FGSC 987)).